The primary structure comprises 238 residues: Survival of motor neuron-related-splicing factor 30 (238 aa).

The region spanning 72–132 (SWKVGDKCMA…KPVEEGRKAK (61 aa)) is the Tudor domain. The Nuclear localization signal signature appears at 142–160 (KKEMIAQQREYKKKKALKK). Position 201 is a phosphoserine (Ser-201). The residue at position 219 (Lys-219) is an N6-acetyllysine.

The protein belongs to the SMN family. As to quaternary structure, associates with spliceosomes. Associates with U4/U5/U6 tri-snRNP and with U2 snRNP.

The protein localises to the nucleus speckle. It is found in the nucleus. It localises to the cajal body. Functionally, involved in spliceosome assembly. The polypeptide is Survival of motor neuron-related-splicing factor 30 (SMNDC1) (Pongo abelii (Sumatran orangutan)).